Reading from the N-terminus, the 191-residue chain is Peptidyl-tRNA hydrolase (191 aa).

Tyr16 lines the tRNA pocket. Residue His21 is the Proton acceptor of the active site. 3 residues coordinate tRNA: Phe66, Asn68, and Asn114.

The protein belongs to the PTH family. As to quaternary structure, monomer.

Its subcellular location is the cytoplasm. The enzyme catalyses an N-acyl-L-alpha-aminoacyl-tRNA + H2O = an N-acyl-L-amino acid + a tRNA + H(+). Hydrolyzes ribosome-free peptidyl-tRNAs (with 1 or more amino acids incorporated), which drop off the ribosome during protein synthesis, or as a result of ribosome stalling. Functionally, catalyzes the release of premature peptidyl moieties from peptidyl-tRNA molecules trapped in stalled 50S ribosomal subunits, and thus maintains levels of free tRNAs and 50S ribosomes. The polypeptide is Peptidyl-tRNA hydrolase (Geotalea daltonii (strain DSM 22248 / JCM 15807 / FRC-32) (Geobacter daltonii)).